Consider the following 196-residue polypeptide: dTTP/UTP pyrophosphatase (196 aa).

The Proton acceptor role is filled by D76.

This sequence belongs to the Maf family. YhdE subfamily. A divalent metal cation serves as cofactor.

It is found in the cytoplasm. The catalysed reaction is dTTP + H2O = dTMP + diphosphate + H(+). It carries out the reaction UTP + H2O = UMP + diphosphate + H(+). In terms of biological role, nucleoside triphosphate pyrophosphatase that hydrolyzes dTTP and UTP. May have a dual role in cell division arrest and in preventing the incorporation of modified nucleotides into cellular nucleic acids. The chain is dTTP/UTP pyrophosphatase from Chlorobium chlorochromatii (strain CaD3).